The primary structure comprises 399 residues: MAHITINQYLQQVQEAIDSKDGFNCADLVSFKHPHVANARLQLLSPEEKCQQVLEPPYDEMFAAHLRCINAASNHDFVEAYKYQTLVVQSFLKSFQAHKEENWALPIMYSITLDLRIFANNADQQLVKKGKGKVGDMLEKAAEILMSCFRVCASDTRAAFEDSKKWGMLFLVNQLFKIYFKISKLHLCKPLIRAIDSSNFKEEYTMAQRVTFKYYVGRKSMFDSDFKKAEEYLSFAFEHCHRSSQKNKRMILIYLLPVKMLLGHMPTIHLLKKYDLMQFAEVTKAVSEGNLLLLTEALTKHETFFIRCGIFLILEKLKIISYRNLFKKVYLLLKTHQLSLDAFLVALKFMEVGDVDIDEVQCIIANLIYMGHIKGYISHQHQKLVVSKQNPFPPLSTVC.

Residues 210–391 enclose the PCI domain; sequence VTFKYYVGRK…QKLVVSKQNP (182 aa).

It belongs to the CSN12 family.

The sequence is that of PCI domain-containing protein 2 (pcid2) from Xenopus laevis (African clawed frog).